A 185-amino-acid chain; its full sequence is Large ribosomal subunit protein uL22 (185 aa).

The interval Ala-158–Glu-185 is disordered. Residues Lys-167–Ala-176 are compositionally biased toward basic residues.

It belongs to the universal ribosomal protein uL22 family.

This chain is Large ribosomal subunit protein uL22 (RpL17), found in Diaphorina citri (Asian citrus psyllid).